Here is a 213-residue protein sequence, read N- to C-terminus: Adenylate kinase (213 aa).

10–15 lines the ATP pocket; it reads GAGKGT. Residues 30–59 are NMP; that stretch reads STGDMLRAAVAAGSEVGLRAKAAMESGSLV. AMP is bound by residues Thr31, Arg36, 57-59, 85-88, and Gln92; these read SLV and GFPR. The segment at 126–163 is LID; it reads GRSSCEKCGEGYHDSFKPSAQPNVCDKCSGTLKRRADD. Residue Arg127 participates in ATP binding. Residues Cys130, Cys133, Cys150, and Cys153 each contribute to the Zn(2+) site. 2 residues coordinate AMP: Arg160 and Arg171. Gln199 contacts ATP.

This sequence belongs to the adenylate kinase family. In terms of assembly, monomer.

Its subcellular location is the cytoplasm. The enzyme catalyses AMP + ATP = 2 ADP. It participates in purine metabolism; AMP biosynthesis via salvage pathway; AMP from ADP: step 1/1. In terms of biological role, catalyzes the reversible transfer of the terminal phosphate group between ATP and AMP. Plays an important role in cellular energy homeostasis and in adenine nucleotide metabolism. The protein is Adenylate kinase of Magnetococcus marinus (strain ATCC BAA-1437 / JCM 17883 / MC-1).